The sequence spans 294 residues: Lipoyl synthase (294 aa).

Residues cysteine 38, cysteine 43, cysteine 49, cysteine 64, cysteine 68, cysteine 71, and serine 277 each contribute to the [4Fe-4S] cluster site. Residues 50-266 (WSRGTATFLL…RSFAEGAGFR (217 aa)) enclose the Radical SAM core domain.

Belongs to the radical SAM superfamily. Lipoyl synthase family. It depends on [4Fe-4S] cluster as a cofactor.

It is found in the cytoplasm. The enzyme catalyses [[Fe-S] cluster scaffold protein carrying a second [4Fe-4S](2+) cluster] + N(6)-octanoyl-L-lysyl-[protein] + 2 oxidized [2Fe-2S]-[ferredoxin] + 2 S-adenosyl-L-methionine + 4 H(+) = [[Fe-S] cluster scaffold protein] + N(6)-[(R)-dihydrolipoyl]-L-lysyl-[protein] + 4 Fe(3+) + 2 hydrogen sulfide + 2 5'-deoxyadenosine + 2 L-methionine + 2 reduced [2Fe-2S]-[ferredoxin]. Its pathway is protein modification; protein lipoylation via endogenous pathway; protein N(6)-(lipoyl)lysine from octanoyl-[acyl-carrier-protein]: step 2/2. Its function is as follows. Catalyzes the radical-mediated insertion of two sulfur atoms into the C-6 and C-8 positions of the octanoyl moiety bound to the lipoyl domains of lipoate-dependent enzymes, thereby converting the octanoylated domains into lipoylated derivatives. The sequence is that of Lipoyl synthase from Pelodictyon phaeoclathratiforme (strain DSM 5477 / BU-1).